Consider the following 628-residue polypeptide: Alpha-L-arabinofuranosidase A (628 aa).

An N-terminal signal peptide occupies residues 1-25; sequence MVAFSALSGVSAVSLLLSLVQNAHG. N-linked (GlcNAc...) asparagine glycosylation is found at Asn-36, Asn-51, Asn-74, Asn-152, Asn-171, Asn-260, Asn-359, Asn-440, Asn-493, and Asn-610.

It belongs to the glycosyl hydrolase 51 family.

The enzyme catalyses Hydrolysis of terminal non-reducing alpha-L-arabinofuranoside residues in alpha-L-arabinosides.. It participates in glycan metabolism; L-arabinan degradation. Acts only on small linear 1,5-alpha-linked L-arabinofuranosyl oligosaccharides. This chain is Alpha-L-arabinofuranosidase A (abfA), found in Aspergillus niger.